Reading from the N-terminus, the 256-residue chain is Enolase-phosphatase E1 (256 aa).

2 residues coordinate Mg(2+): Asp-14 and Glu-16. Substrate-binding positions include 142-143 (SS) and Lys-176. Asp-201 contributes to the Mg(2+) binding site.

Belongs to the HAD-like hydrolase superfamily. MasA/MtnC family. As to quaternary structure, monomer. Mg(2+) serves as cofactor.

Its subcellular location is the cytoplasm. It is found in the nucleus. It carries out the reaction 5-methylsulfanyl-2,3-dioxopentyl phosphate + H2O = 1,2-dihydroxy-5-(methylsulfanyl)pent-1-en-3-one + phosphate. Its pathway is amino-acid biosynthesis; L-methionine biosynthesis via salvage pathway; L-methionine from S-methyl-5-thio-alpha-D-ribose 1-phosphate: step 3/6. The protein operates within amino-acid biosynthesis; L-methionine biosynthesis via salvage pathway; L-methionine from S-methyl-5-thio-alpha-D-ribose 1-phosphate: step 4/6. In terms of biological role, bifunctional enzyme that catalyzes the enolization of 2,3-diketo-5-methylthiopentyl-1-phosphate (DK-MTP-1-P) into the intermediate 2-hydroxy-3-keto-5-methylthiopentenyl-1-phosphate (HK-MTPenyl-1-P), which is then dephosphorylated to form the acireductone 1,2-dihydroxy-3-keto-5-methylthiopentene (DHK-MTPene). The protein is Enolase-phosphatase E1 of Drosophila melanogaster (Fruit fly).